We begin with the raw amino-acid sequence, 328 residues long: Phenylalanine--tRNA ligase alpha subunit (328 aa).

E245 lines the Mg(2+) pocket.

The protein belongs to the class-II aminoacyl-tRNA synthetase family. Phe-tRNA synthetase alpha subunit type 1 subfamily. As to quaternary structure, tetramer of two alpha and two beta subunits. The cofactor is Mg(2+).

The protein resides in the cytoplasm. The catalysed reaction is tRNA(Phe) + L-phenylalanine + ATP = L-phenylalanyl-tRNA(Phe) + AMP + diphosphate + H(+). The polypeptide is Phenylalanine--tRNA ligase alpha subunit (Helicobacter pylori (strain HPAG1)).